A 384-amino-acid polypeptide reads, in one-letter code: Zinc metalloproteinase nas-12 (384 aa).

The signal sequence occupies residues 1–25 (MLYIPQFSIYFCLGYLLLFCKISNA). In terms of domain architecture, Peptidase M12A spans 73–271 (VSIKGSSMNR…EKLNRLGQCG (199 aa)). Cystine bridges form between C116–C270, C137–C156, C287–C325, C296–C318, and C305–C322. H164 contacts Zn(2+). E165 is a catalytic residue. H168 and H174 together coordinate Zn(2+). Residues 287–325 (CQDVATAVSCEGNRRRGMCKNPFYKQMMIKSCQKTCRLC) form the ShKT 1 domain. N-linked (GlcNAc...) asparagine glycosylation occurs at N340. 3 disulfide bridges follow: C348-C384, C355-C377, and C364-C381. The ShKT 2 domain occupies 348–384 (CEDKHPRCDIYSHNGFCTLPFYDDVRYQLCAKTCNLC).

Zn(2+) serves as cofactor. As to expression, expressed in pharyngeal glands.

The protein resides in the secreted. In terms of biological role, metalloprotease. The protein is Zinc metalloproteinase nas-12 (nas-12) of Caenorhabditis elegans.